Consider the following 317-residue polypeptide: tRNA dimethylallyltransferase (317 aa).

Gly-16–Ser-23 is a binding site for ATP. Residue Thr-18–Ser-23 participates in substrate binding. Interaction with substrate tRNA stretches follow at residues Asp-41–Gln-44, Gln-165–Arg-169, and Arg-247–Arg-252.

Belongs to the IPP transferase family. As to quaternary structure, monomer. It depends on Mg(2+) as a cofactor.

It carries out the reaction adenosine(37) in tRNA + dimethylallyl diphosphate = N(6)-dimethylallyladenosine(37) in tRNA + diphosphate. In terms of biological role, catalyzes the transfer of a dimethylallyl group onto the adenine at position 37 in tRNAs that read codons beginning with uridine, leading to the formation of N6-(dimethylallyl)adenosine (i(6)A). The polypeptide is tRNA dimethylallyltransferase (Nitrosomonas eutropha (strain DSM 101675 / C91 / Nm57)).